A 107-amino-acid polypeptide reads, in one-letter code: Iron-binding protein IscA (107 aa).

Fe cation contacts are provided by cysteine 35, cysteine 99, and cysteine 101.

It belongs to the HesB/IscA family. In terms of assembly, homodimer; may form tetramers and higher multimers. The cofactor is Fe cation.

Its function is as follows. Is able to transfer iron-sulfur clusters to apo-ferredoxin. Multiple cycles of [2Fe2S] cluster formation and transfer are observed, suggesting that IscA acts catalytically. Recruits intracellular free iron so as to provide iron for the assembly of transient iron-sulfur cluster in IscU in the presence of IscS, L-cysteine and the thioredoxin reductase system TrxA/TrxB. The chain is Iron-binding protein IscA from Serratia proteamaculans (strain 568).